We begin with the raw amino-acid sequence, 275 residues long: Large ribosomal subunit protein uL2 (275 aa).

Residues 223–275 form a disordered region; the sequence is VAMNPVDHPHGGGEGRTSGGRHPVTPWGVPTKGYKTRSNKRTDKYIVRRRNKK.

This sequence belongs to the universal ribosomal protein uL2 family. In terms of assembly, part of the 50S ribosomal subunit. Forms a bridge to the 30S subunit in the 70S ribosome.

In terms of biological role, one of the primary rRNA binding proteins. Required for association of the 30S and 50S subunits to form the 70S ribosome, for tRNA binding and peptide bond formation. It has been suggested to have peptidyltransferase activity; this is somewhat controversial. Makes several contacts with the 16S rRNA in the 70S ribosome. The polypeptide is Large ribosomal subunit protein uL2 (Shewanella loihica (strain ATCC BAA-1088 / PV-4)).